Reading from the N-terminus, the 361-residue chain is Chorismate synthase (361 aa).

Residues arginine 48 and arginine 54 each coordinate NADP(+). FMN-binding positions include 125–127, 238–239, glycine 278, 293–297, and arginine 319; these read RSS, NA, and KPTSS.

The protein belongs to the chorismate synthase family. Homotetramer. Requires FMNH2 as cofactor.

It carries out the reaction 5-O-(1-carboxyvinyl)-3-phosphoshikimate = chorismate + phosphate. It functions in the pathway metabolic intermediate biosynthesis; chorismate biosynthesis; chorismate from D-erythrose 4-phosphate and phosphoenolpyruvate: step 7/7. In terms of biological role, catalyzes the anti-1,4-elimination of the C-3 phosphate and the C-6 proR hydrogen from 5-enolpyruvylshikimate-3-phosphate (EPSP) to yield chorismate, which is the branch point compound that serves as the starting substrate for the three terminal pathways of aromatic amino acid biosynthesis. This reaction introduces a second double bond into the aromatic ring system. This chain is Chorismate synthase, found in Pectobacterium carotovorum subsp. carotovorum (strain PC1).